Consider the following 59-residue polypeptide: Cuticle protein 7 isoform c (59 aa).

A Pyrrolidone carboxylic acid modification is found at Q1.

This chain is Cuticle protein 7 isoform c, found in Limulus polyphemus (Atlantic horseshoe crab).